The following is a 317-amino-acid chain: Acetyl-coenzyme A carboxylase carboxyl transferase subunit alpha (317 aa).

The CoA carboxyltransferase C-terminal domain occupies 40 to 293 (LEKRSADALK…GDIIAASLRS (254 aa)).

Belongs to the AccA family. In terms of assembly, acetyl-CoA carboxylase is a heterohexamer composed of biotin carboxyl carrier protein (AccB), biotin carboxylase (AccC) and two subunits each of ACCase subunit alpha (AccA) and ACCase subunit beta (AccD).

The protein localises to the cytoplasm. It carries out the reaction N(6)-carboxybiotinyl-L-lysyl-[protein] + acetyl-CoA = N(6)-biotinyl-L-lysyl-[protein] + malonyl-CoA. It functions in the pathway lipid metabolism; malonyl-CoA biosynthesis; malonyl-CoA from acetyl-CoA: step 1/1. Functionally, component of the acetyl coenzyme A carboxylase (ACC) complex. First, biotin carboxylase catalyzes the carboxylation of biotin on its carrier protein (BCCP) and then the CO(2) group is transferred by the carboxyltransferase to acetyl-CoA to form malonyl-CoA. This Brucella abortus (strain S19) protein is Acetyl-coenzyme A carboxylase carboxyl transferase subunit alpha.